The primary structure comprises 473 residues: M-phase inducer phosphatase 3 (473 aa).

Residues 1 to 23 (MSTELFSSTREEGSSGSGPSFRS) form a disordered region. Position 2 is an N-acetylserine (serine 2). 2 positions are modified to phosphoserine: serine 20 and serine 38. Threonine 48 is subject to Phosphothreonine. Residues serine 57, serine 61, and serine 64 each carry the phosphoserine modification. Position 67 is a phosphothreonine (threonine 67). Serine 122 is subject to Phosphoserine; by CDK1. At serine 129 the chain carries Phosphoserine. Residue threonine 130 is modified to Phosphothreonine. The disordered stretch occupies residues 132–158 (NGLDRGHRKRDAMCSSSANKENDNGNL). Residues 145–158 (CSSSANKENDNGNL) show a composition bias toward polar residues. Serine 168 carries the phosphoserine modification. Phosphoserine; by PLK3 occurs at positions 191 and 198. A Phosphoserine; by CDK1 modification is found at serine 214. Serine 216 is modified (phosphoserine; by CHEK1, CHEK2, BRSK1, MAPK14 AND MARK3). Positions 321 to 428 (LIEKFYVIDC…FFPEYMELCE (108 aa)) constitute a Rhodanese domain. Residues 334–379 (YEYLGGHIQGALNLYSQEELFNFFLKKPIVPLDTQKRIIIVFHCEF) form an HIV-1 Vpr binding site region. Residue cysteine 377 is part of the active site. The residue at position 472 (serine 472) is a Phosphoserine.

This sequence belongs to the MPI phosphatase family. As to quaternary structure, interacts with MAPK14 and 14-3-3 proteins. When phosphorylated on Ser-129 and/or Thr-130, interacts with PLK1. Interacts with MARK3/C-TAK1. (Microbial infection) Interacts with HIV-1 Vpr; this interaction inactivates CDC25C phosphatase activity. Phosphorylated by CHEK1 and MAPK14 at Ser-216. This phosphorylation creates a binding site for 14-3-3 protein and inhibits the phosphatase. Phosphorylated by PLK4. Phosphorylated by PLK1, leading to activate the phosphatase activity. Phosphorylation by PLK3 at Ser-191 promotes nuclear translocation. Ser-198 is a minor phosphorylation site. Was initially reported to be phosphorylated by PLK3 at Ser-216. However, such phosphorylation by PLK3 was not confirmed by other groups. Phosphorylation at Thr-48, Thr-67, Ser-122, Thr-130, Ser-168 and Ser-214 occurs at G2 and G2-M transition and is probably catalyzed by CDK1. Ser-168 phosphorylation levels are lower than those at the other 5 CDK1 sites. Phosphorylation by CDK1 leads to increased activity.

Its subcellular location is the nucleus. It carries out the reaction O-phospho-L-tyrosyl-[protein] + H2O = L-tyrosyl-[protein] + phosphate. Functions as a dosage-dependent inducer in mitotic control. Tyrosine protein phosphatase required for progression of the cell cycle. When phosphorylated, highly effective in activating G2 cells into prophase. Directly dephosphorylates CDK1 and activates its kinase activity. The protein is M-phase inducer phosphatase 3 (CDC25C) of Homo sapiens (Human).